Reading from the N-terminus, the 361-residue chain is Chorismate synthase (361 aa).

The NADP(+) site is built by Arg-48 and Arg-54. FMN-binding positions include 125 to 127, 238 to 239, Gly-278, 293 to 297, and Arg-319; these read RSS, NA, and KPTSS.

It belongs to the chorismate synthase family. Homotetramer. It depends on FMNH2 as a cofactor.

The catalysed reaction is 5-O-(1-carboxyvinyl)-3-phosphoshikimate = chorismate + phosphate. The protein operates within metabolic intermediate biosynthesis; chorismate biosynthesis; chorismate from D-erythrose 4-phosphate and phosphoenolpyruvate: step 7/7. Catalyzes the anti-1,4-elimination of the C-3 phosphate and the C-6 proR hydrogen from 5-enolpyruvylshikimate-3-phosphate (EPSP) to yield chorismate, which is the branch point compound that serves as the starting substrate for the three terminal pathways of aromatic amino acid biosynthesis. This reaction introduces a second double bond into the aromatic ring system. The sequence is that of Chorismate synthase from Vibrio campbellii (strain ATCC BAA-1116).